The chain runs to 1044 residues: Elongation factor 3 (1044 aa).

Residues A5–I42 form an HEAT 1 repeat. 2 residues coordinate ADP: I42 and H44. An HEAT 2 repeat occupies D45–L80. S83 serves as a coordination point for ADP. HEAT repeat units follow at residues P86 to P123, V124 to T162, L166 to N203, D205 to P241, A242 to D279, and P285 to V323. 3 residues coordinate ADP: T392, H396, and E397. ABC transporter domains lie at D426–L641 and V667–D993. Residues N703, E922, N925, and H951 each coordinate ADP. The disordered stretch occupies residues G975–F1044. Residues R987–D999 are compositionally biased toward basic and acidic residues. A compositionally biased stretch (basic residues) spans N1009–K1031.

It belongs to the ABC transporter superfamily. ABCF family. EF3 subfamily. Monomer.

It localises to the cytoplasm. The catalysed reaction is ATP + H2O = ADP + phosphate + H(+). It functions in the pathway protein biosynthesis; polypeptide chain elongation. Functionally, ribosome-dependent ATPase that functions in cytoplasmic translation elongation. Required for the ATP-dependent release of deacylated tRNA from the ribosomal E-site during protein biosynthesis. Stimulates the eEF1A-dependent binding of aminoacyl-tRNA to the ribosomal A-site, which has reduced affinity for tRNA as long as the E-site is occupied. Assists translation termination by stimulating the release of nascent protein from the ribosome by release factors. This Eremothecium gossypii (strain ATCC 10895 / CBS 109.51 / FGSC 9923 / NRRL Y-1056) (Yeast) protein is Elongation factor 3 (TEF3).